The primary structure comprises 62 residues: Large ribosomal subunit protein bL28 (62 aa).

Belongs to the bacterial ribosomal protein bL28 family.

In Acholeplasma laidlawii (strain PG-8A), this protein is Large ribosomal subunit protein bL28.